The sequence spans 290 residues: Probable transcriptional regulatory protein HAH1 (290 aa).

The protein belongs to the TACO1 family.

It is found in the mitochondrion. The polypeptide is Probable transcriptional regulatory protein HAH1 (Saccharomyces cerevisiae (strain ATCC 204508 / S288c) (Baker's yeast)).